A 372-amino-acid chain; its full sequence is Ligninase A (372 aa).

The first 21 residues, 1–21 (MAFKQLVAAISLALSLTTANA), serve as a signal peptide directing secretion. Residues 22–28 (AVVKEKR) constitute a propeptide that is removed on maturation. 4 cysteine pairs are disulfide-bonded: cysteine 31–cysteine 43, cysteine 42–cysteine 313, cysteine 62–cysteine 148, and cysteine 277–cysteine 345. The active-site Proton acceptor is the histidine 75. Ca(2+) contacts are provided by aspartate 76, glycine 94, aspartate 96, and serine 98. Histidine 204 serves as a coordination point for heme b. Positions 205, 222, 224, 227, and 229 each coordinate Ca(2+). N-linked (GlcNAc...) asparagine glycosylation is present at asparagine 285.

This sequence belongs to the peroxidase family. Ligninase subfamily. Heme b serves as cofactor. Requires Ca(2+) as cofactor.

The catalysed reaction is 1-(3,4-dimethoxyphenyl)-2-(2-methoxyphenoxy)propane-1,3-diol + H2O2 = 3,4-dimethoxybenzaldehyde + guaiacol + glycolaldehyde + H2O. The enzyme catalyses 2 (3,4-dimethoxyphenyl)methanol + H2O2 = 2 (3,4-dimethoxyphenyl)methanol radical + 2 H2O. The protein operates within secondary metabolite metabolism; lignin degradation. In terms of biological role, depolymerization of lignin. Catalyzes the C(alpha)-C(beta) cleavage of the propyl side chains of lignin. The polypeptide is Ligninase A (LIPA) (Phanerodontia chrysosporium (White-rot fungus)).